Reading from the N-terminus, the 167-residue chain is SsrA-binding protein (167 aa).

Residues 139 to 167 (QAHDKRHAEKEREWQRDKQRIMRAHNRNA) form a disordered region. Residues 144-158 (RHAEKEREWQRDKQR) are compositionally biased toward basic and acidic residues.

Belongs to the SmpB family.

The protein resides in the cytoplasm. Required for rescue of stalled ribosomes mediated by trans-translation. Binds to transfer-messenger RNA (tmRNA), required for stable association of tmRNA with ribosomes. tmRNA and SmpB together mimic tRNA shape, replacing the anticodon stem-loop with SmpB. tmRNA is encoded by the ssrA gene; the 2 termini fold to resemble tRNA(Ala) and it encodes a 'tag peptide', a short internal open reading frame. During trans-translation Ala-aminoacylated tmRNA acts like a tRNA, entering the A-site of stalled ribosomes, displacing the stalled mRNA. The ribosome then switches to translate the ORF on the tmRNA; the nascent peptide is terminated with the 'tag peptide' encoded by the tmRNA and targeted for degradation. The ribosome is freed to recommence translation, which seems to be the essential function of trans-translation. This chain is SsrA-binding protein, found in Xylella fastidiosa (strain M12).